The primary structure comprises 146 residues: Large ribosomal subunit protein uL15 (146 aa).

The tract at residues 1–54 (MTLRLNELAPAEGAKRDNRRLGRGIGSGVGKTGGRGVKGQKSRKSGGVRPGFEG) is disordered. A compositionally biased stretch (gly residues) spans 23–37 (RGIGSGVGKTGGRGV).

The protein belongs to the universal ribosomal protein uL15 family. Part of the 50S ribosomal subunit.

Its function is as follows. Binds to the 23S rRNA. The sequence is that of Large ribosomal subunit protein uL15 from Acinetobacter baylyi (strain ATCC 33305 / BD413 / ADP1).